Reading from the N-terminus, the 735-residue chain is Disintegrin and metalloproteinase domain-containing protein 2 (735 aa).

A signal peptide spans 1–15; it reads MLCLLLLLCGLASLG. A propeptide spanning residues 16-176 is cleaved from the precursor; that stretch reads GPLKKYVENS…KIKSIKSSVR (161 aa). Residues 16–680 are Extracellular-facing; that stretch reads GPLKKYVENS…EGAYHTKSRK (665 aa). N-linked (GlcNAc...) asparagine glycans are attached at residues N55, N220, and N288. The 198-residue stretch at 178 to 375 folds into the Peptidase M12B domain; sequence HYIEMHIIVE…QVSQCLQNQP (198 aa). Cystine bridges form between C287/C370, C329/C354, C331/C336, and C442/C455. N-linked (GlcNAc...) asparagine glycosylation occurs at N353. Positions 384–470 constitute a Disintegrin domain; the sequence is NPVCGNNRVE…ACQEDLYVIN (87 aa). N-linked (GlcNAc...) asparagine glycosylation is found at N456 and N564. Residues 610–643 form the EGF-like domain; that stretch reads LGYDCTPATCSDHGVCNNKRHCHCNPTYVPPNCE. Disulfide bonds link C614–C625, C619–C631, and C633–C642. Residues 681–701 traverse the membrane as a helical segment; sequence WPFFLIIPFFVIFSVLVATVV. Over 702-735 the chain is Cytoplasmic; it reads KVYYQKKKWKTEDYANDENIESESEPKSSKVSSK. The interval 716 to 735 is disordered; it reads ANDENIESESEPKSSKVSSK. S723 is modified (phosphoserine).

Heterodimer with ADAM1/fertilin subunit alpha. Post-translationally, the signal and the metalloprotease domain are cleaved during the epididymal maturation of the spermatozoa. Expressed specifically in testis.

Its subcellular location is the membrane. Sperm surface membrane protein that may be involved in sperm-egg plasma membrane adhesion and fusion during fertilization. Could have a direct role in sperm-zona binding or migration of sperm from the uterus into the oviduct. Interactions with egg membrane could be mediated via binding between its disintegrin-like domain to one or more integrins receptors on the egg. This is a non catalytic metalloprotease-like protein. The protein is Disintegrin and metalloproteinase domain-containing protein 2 (ADAM2) of Cavia porcellus (Guinea pig).